A 249-amino-acid chain; its full sequence is Phosphate import ATP-binding protein PstB 2 (249 aa).

The region spanning 4–244 is the ABC transporter domain; that stretch reads FDIENLDLYY…PSDDRTRGYV (241 aa). Residue 36–43 coordinates ATP; it reads GPSGCGKS.

It belongs to the ABC transporter superfamily. Phosphate importer (TC 3.A.1.7) family. As to quaternary structure, the complex is composed of two ATP-binding proteins (PstB), two transmembrane proteins (PstC and PstA) and a solute-binding protein (PstS).

The protein resides in the cell inner membrane. It carries out the reaction phosphate(out) + ATP + H2O = ADP + 2 phosphate(in) + H(+). Part of the ABC transporter complex PstSACB involved in phosphate import. Responsible for energy coupling to the transport system. The polypeptide is Phosphate import ATP-binding protein PstB 2 (Vibrio vulnificus (strain CMCP6)).